Consider the following 94-residue polypeptide: Alpha-conotoxin-like Vt20.1 (94 aa).

The signal sequence occupies residues 1-25; it reads MPKLAVVLLVLLILPLSYFDAGGQA. Residues 26-44 constitute a propeptide that is removed on maturation; that stretch reads VQGDWRGNRLARDLQRGGR. 2 positions are modified to 4-carboxyglutamate: E47 and E49. 4 disulfides stabilise this stretch: C63–C72, C68–C80, C73–C90, and C78–C92.

This sequence belongs to the conotoxin D superfamily. As to quaternary structure, hetero-, homo- or pseudo-homodimer (identical sequence, different post-translational modifications). In terms of tissue distribution, expressed by the venom duct.

Its subcellular location is the secreted. Its function is as follows. Alpha-conotoxins act on postsynaptic membranes, they bind to the nicotinic acetylcholine receptors (nAChR) and thus inhibit them. Through its two C-terminal domains, this homodimeric protein would bind to two nAChR allosteric sites, located outside the nAChR C-loop of the principal binding face and at the adjacent binding interface in a clockwise direction. This toxin specifically blocks mammalian neuronal nAChR of the alpha-7/CHRNA7, alpha-3-beta-2/CHRNA3-CHRNB2 and alpha-4-beta-2/CHRNA4-CHRNB2 subtypes. The sequence is that of Alpha-conotoxin-like Vt20.1 from Conus planorbis (Planorbis cone).